A 346-amino-acid polypeptide reads, in one-letter code: 4-amino-5-hydroxymethyl-2-methylpyrimidine phosphate synthase (346 aa).

Position 62 is an N6-(pyridoxal phosphate)lysine (K62). H66 is an active-site residue. Residue 114–117 (GEFG) coordinates pyridoxal 5'-phosphate. Positions 194-198 (CCCFC) match the CCCFC; essential for catalytic activity, may be the site of iron coordination motif.

Belongs to the NMT1/THI5 family. As to quaternary structure, homodimer. The cofactor is Fe cation.

It is found in the cytoplasm. It localises to the nucleus. The catalysed reaction is N(6)-(pyridoxal phosphate)-L-lysyl-[4-amino-5-hydroxymethyl-2-methylpyrimidine phosphate synthase] + L-histidyl-[4-amino-5-hydroxymethyl-2-methylpyrimidine phosphate synthase] + 2 Fe(3+) + 4 H2O = L-lysyl-[4-amino-5-hydroxymethyl-2-methylpyrimidine phosphate synthase] + (2S)-2-amino-5-hydroxy-4-oxopentanoyl-[4-amino-5-hydroxymethyl-2-methylpyrimidine phosphate synthase] + 4-amino-2-methyl-5-(phosphooxymethyl)pyrimidine + 3-oxopropanoate + 2 Fe(2+) + 2 H(+). It functions in the pathway cofactor biosynthesis; thiamine diphosphate biosynthesis. Functionally, responsible for the formation of the pyrimidine heterocycle in the thiamine biosynthesis pathway. Catalyzes the formation of hydroxymethylpyrimidine phosphate (HMP-P) from histidine and pyridoxal phosphate (PLP). The protein uses PLP and the active site histidine to form HMP-P, generating an inactive enzyme. The enzyme can only undergo a single turnover, which suggests it is a suicide enzyme. This chain is 4-amino-5-hydroxymethyl-2-methylpyrimidine phosphate synthase, found in Schizosaccharomyces pombe (strain 972 / ATCC 24843) (Fission yeast).